Reading from the N-terminus, the 473-residue chain is Ribulose bisphosphate carboxylase large chain (473 aa).

A propeptide spanning residues 1–2 (MS) is cleaved from the precursor. At Pro3 the chain carries N-acetylproline. Lys14 carries the N6,N6,N6-trimethyllysine modification. The substrate site is built by Asn123 and Thr173. The Proton acceptor role is filled by Lys175. Lys177 provides a ligand contact to substrate. Residues Lys201, Asp203, and Glu204 each coordinate Mg(2+). Lys201 is subject to N6-carboxylysine. His294 acts as the Proton acceptor in catalysis. 3 residues coordinate substrate: Arg295, His327, and Ser379.

This sequence belongs to the RuBisCO large chain family. Type I subfamily. In terms of assembly, heterohexadecamer of 8 large chains and 8 small chains; disulfide-linked. The disulfide link is formed within the large subunit homodimers. The cofactor is Mg(2+). Post-translationally, the disulfide bond which can form in the large chain dimeric partners within the hexadecamer appears to be associated with oxidative stress and protein turnover.

The protein resides in the plastid. The protein localises to the chloroplast. It catalyses the reaction 2 (2R)-3-phosphoglycerate + 2 H(+) = D-ribulose 1,5-bisphosphate + CO2 + H2O. The catalysed reaction is D-ribulose 1,5-bisphosphate + O2 = 2-phosphoglycolate + (2R)-3-phosphoglycerate + 2 H(+). Its function is as follows. RuBisCO catalyzes two reactions: the carboxylation of D-ribulose 1,5-bisphosphate, the primary event in carbon dioxide fixation, as well as the oxidative fragmentation of the pentose substrate in the photorespiration process. Both reactions occur simultaneously and in competition at the same active site. The sequence is that of Ribulose bisphosphate carboxylase large chain from Ajuga chamaepitys (Yellow bugle).